A 144-amino-acid polypeptide reads, in one-letter code: Peptide methionine sulfoxide reductase MsrB (144 aa).

The region spanning 6–128 (KDELKKKLTP…NSAALRFIPK (123 aa)) is the MsrB domain. Cys117 functions as the Nucleophile in the catalytic mechanism.

Belongs to the MsrB Met sulfoxide reductase family.

It carries out the reaction L-methionyl-[protein] + [thioredoxin]-disulfide + H2O = L-methionyl-(R)-S-oxide-[protein] + [thioredoxin]-dithiol. The sequence is that of Peptide methionine sulfoxide reductase MsrB from Shouchella clausii (strain KSM-K16) (Alkalihalobacillus clausii).